A 74-amino-acid polypeptide reads, in one-letter code: Serine protease inhibitor Kazal-type 7 (74 aa).

A signal peptide spans 1–17 (MKLLGGLLLLFTATCLC). The Kazal-like domain maps to 18-74 (NVDCDIYKKYPVVAIPCPIENIPVCGSDYITYGNKCKLCTEILRSNGKIQFLHEGHC). 3 cysteine pairs are disulfide-bonded: Cys21/Cys56, Cys34/Cys53, and Cys42/Cys74.

The protein localises to the secreted. Functionally, probable serine protease inhibitor. In Rattus norvegicus (Rat), this protein is Serine protease inhibitor Kazal-type 7 (Spink7).